The sequence spans 596 residues: Signal peptide peptidase-like 2B (596 aa).

A signal peptide spans 1 to 21 (MAARWAQFLLFSLLSLPQVYC). The Lumenal portion of the chain corresponds to 22–170 (EYGMVHVLSE…APNEPVLDYN (149 aa)). The region spanning 53-147 (HDLGKASLLQ…LLSYSDMLDI (95 aa)) is the PA domain. N93 is a glycosylation site (N-linked (GlcNAc...) asparagine). Residues 171–191 (MVIIFVMAVGTVAIGGYWAGS) traverse the membrane as a helical segment. The Cytoplasmic portion of the chain corresponds to 192 to 219 (RDVKERYMKHKRDDGAEKHEDETVDVTP). The helical transmembrane segment at 220–240 (IMICVFVVMCCSMLVLLYFFY) threads the bilayer. The Lumenal portion of the chain corresponds to 241–242 (DH). The helical transmembrane segment at 243–263 (LVYVIIGIFCLAASIGLYSCL) threads the bilayer. Over 264 to 289 (SPFVRRFPLGKCRIPDNNLPYFHKRP) the chain is Cytoplasmic. A helical membrane pass occupies residues 290–310 (QVRILLLAVFCISVSVVWGVF). Residues 311 to 315 (RNEDQ) lie on the Lumenal side of the membrane. Residues 316–336 (WAWVLQDALGIAFCLYMLKTI) form a helical membrane-spanning segment. The Cytoplasmic segment spans residues 337-344 (RLPTFKGC). The helical transmembrane segment at 345 to 365 (TLLLLVLFVYDVFFVFITPFL) threads the bilayer. D355 is a catalytic residue. At 366 to 408 (TKTGESIMVEVAAGPSDSATHEKLPMVLKVPRLNSSPLALCDR) the chain is on the lumenal side. A helical membrane pass occupies residues 409-429 (PFSLLGFGDILVPGLLVAYCH). The active site involves D417. The Cytoplasmic segment spans residues 430–441 (RFDIQVQSSRVY). Residues 442–462 (FVACTIAYGIGLLVTFVALAL) form a helical membrane-spanning segment. Over 463–466 (MQMG) the chain is Lumenal. Residues 467–487 (QPALLYLVPCTLITSFSVALW) form a helical membrane-spanning segment. A PAL motif is present at residues 468 to 470 (PAL). The Cytoplasmic segment spans residues 488–596 (RKELAMFWTG…SLNLEQKQLE (109 aa)). Positions 543 to 596 (KELHSPTLAAEEPADNDTKTEQSEVSIAQSEEAAGHNKDDLESKSLNLEQKQLE) are disordered. Residues 575–585 (AAGHNKDDLES) show a composition bias toward basic and acidic residues. Over residues 586 to 596 (KSLNLEQKQLE) the composition is skewed to polar residues.

This sequence belongs to the peptidase A22B family.

The protein localises to the cell membrane. The protein resides in the golgi apparatus membrane. Its subcellular location is the lysosome membrane. It localises to the endosome membrane. It is found in the membrane. In terms of biological role, intramembrane-cleaving aspartic protease (I-CLiP) that cleaves type II membrane signal peptides in the hydrophobic plane of the membrane. This is Signal peptide peptidase-like 2B from Gallus gallus (Chicken).